The following is a 573-amino-acid chain: 2-succinyl-5-enolpyruvyl-6-hydroxy-3-cyclohexene-1-carboxylate synthase (573 aa).

This sequence belongs to the TPP enzyme family. MenD subfamily. Homodimer. Mg(2+) is required as a cofactor. Mn(2+) serves as cofactor. The cofactor is thiamine diphosphate.

The catalysed reaction is isochorismate + 2-oxoglutarate + H(+) = 5-enolpyruvoyl-6-hydroxy-2-succinyl-cyclohex-3-ene-1-carboxylate + CO2. Its pathway is quinol/quinone metabolism; 1,4-dihydroxy-2-naphthoate biosynthesis; 1,4-dihydroxy-2-naphthoate from chorismate: step 2/7. The protein operates within quinol/quinone metabolism; menaquinone biosynthesis. Its function is as follows. Catalyzes the thiamine diphosphate-dependent decarboxylation of 2-oxoglutarate and the subsequent addition of the resulting succinic semialdehyde-thiamine pyrophosphate anion to isochorismate to yield 2-succinyl-5-enolpyruvyl-6-hydroxy-3-cyclohexene-1-carboxylate (SEPHCHC). The protein is 2-succinyl-5-enolpyruvyl-6-hydroxy-3-cyclohexene-1-carboxylate synthase of Shewanella oneidensis (strain ATCC 700550 / JCM 31522 / CIP 106686 / LMG 19005 / NCIMB 14063 / MR-1).